The sequence spans 24 residues: N-acyl-L-amino acid amidohydrolase (24 aa).

The protein belongs to the peptidase M20 family. In terms of assembly, homotetramer. Co(2+) is required as a cofactor.

The enzyme catalyses an N-acyl-L-amino acid + H2O = an L-alpha-amino acid + a carboxylate. It carries out the reaction an N-acetyl-L-cysteine-S-conjugate + H2O = an S-substituted L-cysteine + acetate. The protein is N-acyl-L-amino acid amidohydrolase of Parageobacillus thermoglucosidasius (Geobacillus thermoglucosidasius).